A 295-amino-acid polypeptide reads, in one-letter code: ATP-dependent (S)-NAD(P)H-hydrate dehydratase (295 aa).

Positions 9–289 (LLERARNLVP…DQIHQVFDDL (281 aa)) constitute a YjeF C-terminal domain. (6S)-NADPHX-binding positions include Gly109 and 162–168 (NAIEFCR). Residues 193-197 (KGLND) and 214-223 (GSGRRCGGQG) each bind ATP. (6S)-NADPHX is bound at residue Asp224.

Belongs to the NnrD/CARKD family. It depends on Mg(2+) as a cofactor.

It carries out the reaction (6S)-NADHX + ATP = ADP + phosphate + NADH + H(+). The catalysed reaction is (6S)-NADPHX + ATP = ADP + phosphate + NADPH + H(+). In terms of biological role, catalyzes the dehydration of the S-form of NAD(P)HX at the expense of ATP, which is converted to ADP. Together with NAD(P)HX epimerase, which catalyzes the epimerization of the S- and R-forms, the enzyme allows the repair of both epimers of NAD(P)HX, a damaged form of NAD(P)H that is a result of enzymatic or heat-dependent hydration. This Anopheles darlingi (Mosquito) protein is ATP-dependent (S)-NAD(P)H-hydrate dehydratase.